The following is a 340-amino-acid chain: Protein FAM50A-A (340 aa).

Disordered regions lie at residues 1–22 (MAQY…KKRE) and 123–178 (NLEE…EEEN). Positions 124-146 (LEEDEECEDEEGEEEESDKEDPP) are enriched in acidic residues. Positions 169 to 178 (PDRDREEEEN) are enriched in basic and acidic residues.

It is found in the nucleus. Its function is as follows. Probably involved in the regulation of pre-mRNA splicing. This is Protein FAM50A-A (fam50a-a) from Xenopus laevis (African clawed frog).